Reading from the N-terminus, the 138-residue chain is Large ribosomal subunit protein bL19 (138 aa).

This sequence belongs to the bacterial ribosomal protein bL19 family.

In terms of biological role, this protein is located at the 30S-50S ribosomal subunit interface and may play a role in the structure and function of the aminoacyl-tRNA binding site. The polypeptide is Large ribosomal subunit protein bL19 (Rickettsia peacockii (strain Rustic)).